The sequence spans 455 residues: Phosphoglucosamine mutase (455 aa).

S103 acts as the Phosphoserine intermediate in catalysis. Mg(2+) contacts are provided by S103, D243, D245, and D247. Residue S103 is modified to Phosphoserine.

This sequence belongs to the phosphohexose mutase family. Requires Mg(2+) as cofactor. Activated by phosphorylation.

The catalysed reaction is alpha-D-glucosamine 1-phosphate = D-glucosamine 6-phosphate. Its function is as follows. Catalyzes the conversion of glucosamine-6-phosphate to glucosamine-1-phosphate. This chain is Phosphoglucosamine mutase, found in Halorhodospira halophila (strain DSM 244 / SL1) (Ectothiorhodospira halophila (strain DSM 244 / SL1)).